We begin with the raw amino-acid sequence, 367 residues long: dTDP-4-amino-4,6-dideoxy-D-glucose transaminase (367 aa).

Lysine 184 carries the N6-(pyridoxal phosphate)lysine modification.

Belongs to the DegT/DnrJ/EryC1 family. The cofactor is pyridoxal 5'-phosphate.

The enzyme catalyses dTDP-4-amino-4,6-dideoxy-D-glucose + 2-oxoglutarate = dTDP-4-dehydro-6-deoxy-alpha-D-glucose + L-glutamate. It functions in the pathway bacterial outer membrane biogenesis; lipopolysaccharide biosynthesis. In terms of biological role, catalyzes the conversion of dTDP-4-dehydro-6-deoxy-D-glucose (dTDP-D-Glc4O) to dTDP-4-amino-4,6-dideoxy-D-glucose (dTDP-D-Qui4N). L-glutamine can also be used as amino donor. The polypeptide is dTDP-4-amino-4,6-dideoxy-D-glucose transaminase (vioA) (Shigella dysenteriae).